Here is a 102-residue protein sequence, read N- to C-terminus: Large ribosomal subunit protein bL21 (102 aa).

This sequence belongs to the bacterial ribosomal protein bL21 family. In terms of assembly, part of the 50S ribosomal subunit. Contacts protein L20.

Functionally, this protein binds to 23S rRNA in the presence of protein L20. This Exiguobacterium sp. (strain ATCC BAA-1283 / AT1b) protein is Large ribosomal subunit protein bL21.